A 659-amino-acid polypeptide reads, in one-letter code: Cysteine-rich receptor-like protein kinase 5 (659 aa).

Residues 1-24 (MSAYTSLNFLFLLTFFIGSLRVSA) form the signal peptide. The Extracellular portion of the chain corresponds to 25-279 (QLQDPTYVGH…FPPGKGKNST (255 aa)). Gnk2-homologous domains are found at residues 28 to 132 (DPTY…DRNI) and 138 to 243 (TTTT…VYPF). Residues Asn175 and Asn277 are each glycosylated (N-linked (GlcNAc...) asparagine). Residues 280–300 (VIIIAIVVPVAISVLICVAVF) form a helical membrane-spanning segment. The Cytoplasmic segment spans residues 301 to 659 (SFHASKRAKK…AASITILAPR (359 aa)). A Protein kinase domain is found at 340–619 (FSMCNKLGQG…QMLTTSSIAL (280 aa)). ATP-binding positions include 346–354 (LGQGGFGQV) and Lys368. The residue at position 413 (Tyr413) is a Phosphotyrosine. The active-site Proton acceptor is Asp465. Thr505 carries the post-translational modification Phosphothreonine. Tyr513 carries the post-translational modification Phosphotyrosine.

It belongs to the protein kinase superfamily. Ser/Thr protein kinase family. CRK subfamily. In terms of assembly, interacts with CRKIP1 (KAPP), CRKIP2 and CRKIP3, three kinase-associated type 2C proteins.

Its subcellular location is the membrane. It catalyses the reaction L-seryl-[protein] + ATP = O-phospho-L-seryl-[protein] + ADP + H(+). The enzyme catalyses L-threonyl-[protein] + ATP = O-phospho-L-threonyl-[protein] + ADP + H(+). Involved in multiple distinct defense responses. May function as a disease resistance (R) protein. The protein is Cysteine-rich receptor-like protein kinase 5 (CRK5) of Arabidopsis thaliana (Mouse-ear cress).